A 93-amino-acid chain; its full sequence is Small ribosomal subunit protein bS18c (93 aa).

The protein belongs to the bacterial ribosomal protein bS18 family. As to quaternary structure, part of the 30S ribosomal subunit.

The protein resides in the plastid. The protein localises to the chloroplast. This is Small ribosomal subunit protein bS18c from Pinus koraiensis (Korean pine).